Consider the following 194-residue polypeptide: Probable thymidylate kinase (194 aa).

8 to 15 contacts ATP; that stretch reads GIDGSGKT.

The protein belongs to the thymidylate kinase family.

The enzyme catalyses dTMP + ATP = dTDP + ADP. This Sulfolobus acidocaldarius (strain ATCC 33909 / DSM 639 / JCM 8929 / NBRC 15157 / NCIMB 11770) protein is Probable thymidylate kinase.